A 595-amino-acid chain; its full sequence is DNA polymerase (595 aa).

The 3'-5' exonuclease domain maps to Met-1–Asp-212. The segment at Val-213–Tyr-595 is polymerase.

Belongs to the DNA polymerase type-A family.

The enzyme catalyses DNA(n) + a 2'-deoxyribonucleoside 5'-triphosphate = DNA(n+1) + diphosphate. Replicates viral genomic DNA. This polymerase possesses two enzymatic activities: DNA synthesis (polymerase) and an exonucleolytic activity that degrades single-stranded DNA in the 3'-5' direction. In Mycobacterium phage L5 (Mycobacteriophage L5), this protein is DNA polymerase (44).